Consider the following 272-residue polypeptide: Indole-3-glycerol phosphate synthase (272 aa).

Belongs to the TrpC family.

The catalysed reaction is 1-(2-carboxyphenylamino)-1-deoxy-D-ribulose 5-phosphate + H(+) = (1S,2R)-1-C-(indol-3-yl)glycerol 3-phosphate + CO2 + H2O. The protein operates within amino-acid biosynthesis; L-tryptophan biosynthesis; L-tryptophan from chorismate: step 4/5. In Arthrobacter sp. (strain FB24), this protein is Indole-3-glycerol phosphate synthase.